Consider the following 223-residue polypeptide: Endonuclease NucS (223 aa).

The protein belongs to the NucS endonuclease family.

It is found in the cytoplasm. Cleaves both 3' and 5' ssDNA extremities of branched DNA structures. The polypeptide is Endonuclease NucS (Streptomyces coelicolor (strain ATCC BAA-471 / A3(2) / M145)).